The sequence spans 426 residues: Trigger factor 1 (426 aa).

One can recognise a PPIase FKBP-type domain in the interval 163 to 248 (QDTVNIDFAG…VNKLKRKEYA (86 aa)).

This sequence belongs to the FKBP-type PPIase family. Tig subfamily.

It is found in the cytoplasm. It carries out the reaction [protein]-peptidylproline (omega=180) = [protein]-peptidylproline (omega=0). Involved in protein export. Acts as a chaperone by maintaining the newly synthesized protein in an open conformation. Functions as a peptidyl-prolyl cis-trans isomerase. This chain is Trigger factor 1, found in Desulfitobacterium hafniense (strain Y51).